The chain runs to 645 residues: MESPAFSKPLKDKINPWGPLIIMGILVRAGASVQRDSPHQVFNVTWKITNLMTGQTANATSLLGTMTDTFPKLYFDLCDLVGDNWDDPEPDIGDGCRSPGGRKRTRLYDFYVCPGHTVLTGCGGPREGYCGKWGCETTGQAYWKPSSSWDLISLKRGNTPKGQGPCFDSSVGSGSIQGATPGGRCNPLVLEFTDAGKRASWDAPKTWGLRLYRSTGADPVTLFSLTRQVLNVGPRVPIGPNPVITEQLPPSQPVQIMLPRTPRPPPSGAASMVPGAPPPSQQPGTGDRLLNLVEGAYLALNLTSPDKTQECWLCLVSGPPYYEGVAVLGTYSNHTSAPANCSVTSQHKLTLSEVTGQGLCIGAVPKTHQALCNTTQKTSDGSYYLASPAGTIWACSTGLTPCLSTTVLNLTTDYCVLVELWPKVTYHSPNYVYGQFEKKTKYKREPVSLTLALLLGGLTMGGIAAGVGTGTTALVATKQFEQLQAAIHTDLGALEKSVSALEKSLTSLSEVVLQNRRGLDLLFLKEGGLCAALKEECCFYADHTGVVRDSMAKLRERLNQRQKLFESGQGWFEGLFNRSPWFTTLISTIMGPLIVLLLILLFGPCILNRLVQFVKDRISVVQALVLTQQYHQLKSIDPEEVESRE.

Positions 1-33 (MESPAFSKPLKDKINPWGPLIIMGILVRAGASV) are cleaved as a signal peptide. The segment at 32–237 (SVQRDSPHQV…QVLNVGPRVP (206 aa)) is receptor-binding domain (RBD). The Extracellular portion of the chain corresponds to 34–585 (QRDSPHQVFN…FNRSPWFTTL (552 aa)). N-linked (GlcNAc...) asparagine; by host glycosylation is found at asparagine 43 and asparagine 58. Disulfide bonds link cysteine 113–cysteine 130 and cysteine 122–cysteine 135. The interval 260–285 (RTPRPPPSGAASMVPGAPPPSQQPGT) is disordered. The N-linked (GlcNAc...) asparagine; by host glycan is linked to asparagine 301. Intrachain disulfides connect cysteine 311-cysteine 314, cysteine 311-cysteine 538, cysteine 341-cysteine 395, cysteine 360-cysteine 372, cysteine 402-cysteine 415, and cysteine 530-cysteine 537. The CXXC motif lies at 311 to 314 (CWLC). N-linked (GlcNAc...) asparagine; by host glycosylation is found at asparagine 333 and asparagine 340. 2 N-linked (GlcNAc...) asparagine; by host glycosylation sites follow: asparagine 373 and asparagine 409. A fusion peptide region spans residues 447–467 (VSLTLALLLGGLTMGGIAAGV). Residues 490–510 (DLGALEKSVSALEKSLTSLSE) adopt a coiled-coil conformation. An immunosuppression region spans residues 513–529 (LQNRRGLDLLFLKEGGL). The short motif at 530–538 (CAALKEECC) is the CX6CC element. Residues 586 to 606 (ISTIMGPLIVLLLILLFGPCI) traverse the membrane as a helical segment. Cysteine 605 carries S-palmitoyl cysteine; by host lipidation. Residues 607 to 640 (LNRLVQFVKDRISVVQALVLTQQYHQLKSIDPEE) lie on the Cytoplasmic side of the membrane. A YXXL motif; contains endocytosis signal motif is present at residues 630-633 (YHQL).

The mature envelope protein (Env) consists of a trimer of SU-TM heterodimers attached by a labile interchain disulfide bond. The activated Env consists of SU monomers and TM trimers. Post-translationally, specific enzymatic cleavages in vivo yield mature proteins. Envelope glycoproteins are synthesized as an inactive precursor that is N-glycosylated and processed likely by host cell furin or by a furin-like protease in the Golgi to yield the mature SU and TM proteins. The cleavage site between SU and TM requires the minimal sequence [KR]-X-[KR]-R. The R-peptide is released from the C-terminus of the cytoplasmic tail of the TM protein upon particle formation as a result of proteolytic cleavage by the viral protease. Cleavage of this peptide is required for TM to become fusogenic. In terms of processing, the CXXC motif is highly conserved across a broad range of retroviral envelope proteins. It is thought to participate in the formation of a labile disulfide bond possibly with the CX6CC motif present in the transmembrane protein. Isomerization of the intersubunit disulfide bond to an SU intrachain disulfide bond is thought to occur upon receptor recognition in order to allow membrane fusion. The transmembrane protein is palmitoylated. Post-translationally, the R-peptide is palmitoylated.

The protein resides in the virion membrane. The protein localises to the host cell membrane. The surface protein (SU) attaches the virus to the host cell by binding to its receptor. This interaction activates a thiol in a CXXC motif of the C-terminal domain, where the other Cys residue participates in the formation of the intersubunit disulfide. The activated thiol will attack the disulfide and cause its isomerization into a disulfide isomer within the motif. This leads to SU displacement and TM refolding, and is thought to activate its fusogenic potential by unmasking its fusion peptide. Fusion occurs at the host cell plasma membrane. Its function is as follows. The transmembrane protein (TM) acts as a class I viral fusion protein. Under the current model, the protein has at least 3 conformational states: pre-fusion native state, pre-hairpin intermediate state, and post-fusion hairpin state. During viral and target cell membrane fusion, the coiled coil regions (heptad repeats) assume a trimer-of-hairpins structure, positioning the fusion peptide in close proximity to the C-terminal region of the ectodomain. The formation of this structure appears to drive apposition and subsequent fusion of viral and target cell membranes. Membranes fusion leads to delivery of the nucleocapsid into the cytoplasm. The polypeptide is Envelope glycoprotein (env) (Homo sapiens (Human)).